Reading from the N-terminus, the 365-residue chain is P43 5S RNA-binding protein (365 aa).

C2H2-type zinc fingers lie at residues 15 to 39, 45 to 69, 75 to 100, 106 to 130, 136 to 160, 163 to 187, 191 to 213, 220 to 245, and 251 to 275; these read FRCP…MAGH, WKCG…MKRH, HSCP…LYKH, LKCS…VSEH, SVCD…HRRH, YRCS…LKKH, LQCA…KATH, LPCP…RKVH, and HRCP…LVVH.

In terms of assembly, the 42S RNP particle comprises four subunits each of which contains one molecule of 5S RNA, three molecules of tRNA, two molecules of p50 (EF1-alpha) and one molecule of the 5S RNA binding protein 43.

Functionally, p43 is a 5S RNA binding protein which is a major constituent of oocytes and comprises part of a 42S ribonucleoprotein storage particle. The chain is P43 5S RNA-binding protein from Xenopus borealis (Kenyan clawed frog).